The chain runs to 172 residues: uncharacterized protein (172 aa).

A run of 3 helical transmembrane segments spans residues 44–68 (VLVSSVLGALKVILIPCASTYAALT), 86–110 (LASYAMAWLLNILTIAVIIGLVFSL), and 117–135 (VVFISLGLLMSVTTSVTLF).

The protein belongs to the chlamydial CPn_0442/CT_006/TC_0274 family.

It localises to the cell membrane. This is an uncharacterized protein from Chlamydia pneumoniae (Chlamydophila pneumoniae).